Consider the following 397-residue polypeptide: Ribosomal RNA large subunit methyltransferase I (397 aa).

The region spanning 2-81 (STTVYLQKDR…EQIDTEFFVR (80 aa)) is the PUA domain.

Belongs to the methyltransferase superfamily. RlmI family.

The protein resides in the cytoplasm. The enzyme catalyses cytidine(1962) in 23S rRNA + S-adenosyl-L-methionine = 5-methylcytidine(1962) in 23S rRNA + S-adenosyl-L-homocysteine + H(+). Specifically methylates the cytosine at position 1962 (m5C1962) of 23S rRNA. The polypeptide is Ribosomal RNA large subunit methyltransferase I (Tolumonas auensis (strain DSM 9187 / NBRC 110442 / TA 4)).